The sequence spans 194 residues: 3-isopropylmalate dehydratase small subunit (194 aa).

Belongs to the LeuD family. LeuD type 1 subfamily. Heterodimer of LeuC and LeuD.

It catalyses the reaction (2R,3S)-3-isopropylmalate = (2S)-2-isopropylmalate. The protein operates within amino-acid biosynthesis; L-leucine biosynthesis; L-leucine from 3-methyl-2-oxobutanoate: step 2/4. Catalyzes the isomerization between 2-isopropylmalate and 3-isopropylmalate, via the formation of 2-isopropylmaleate. In Halalkalibacterium halodurans (strain ATCC BAA-125 / DSM 18197 / FERM 7344 / JCM 9153 / C-125) (Bacillus halodurans), this protein is 3-isopropylmalate dehydratase small subunit.